Reading from the N-terminus, the 396-residue chain is Diphosphomevalonate decarboxylase (396 aa).

(R)-5-diphosphomevalonate-binding positions include 19–22 (YWGK), arginine 74, 153–158 (SGSACR), and threonine 209.

Belongs to the diphosphomevalonate decarboxylase family. In terms of assembly, homodimer.

It carries out the reaction (R)-5-diphosphomevalonate + ATP = isopentenyl diphosphate + ADP + phosphate + CO2. It participates in isoprenoid biosynthesis; isopentenyl diphosphate biosynthesis via mevalonate pathway; isopentenyl diphosphate from (R)-mevalonate: step 3/3. Its function is as follows. Diphosphomevalonate decarboxylase; part of the second module of ergosterol biosynthesis pathway that includes the middle steps of the pathway. MVD1/ERG19 converts diphosphomevalonate into isopentenyl diphosphate. The second module is carried out in the vacuole and involves the formation of farnesyl diphosphate, which is also an important intermediate in the biosynthesis of ubiquinone, dolichol, heme and prenylated proteins. Activity by the mevalonate kinase ERG12 first converts mevalonate into 5-phosphomevalonate. 5-phosphomevalonate is then further converted to 5-diphosphomevalonate by the phosphomevalonate kinase ERG8. The diphosphomevalonate decarboxylase MVD1/ERG19 then produces isopentenyl diphosphate. The isopentenyl-diphosphate delta-isomerase IDI1 then catalyzes the 1,3-allylic rearrangement of the homoallylic substrate isopentenyl (IPP) to its highly electrophilic allylic isomer, dimethylallyl diphosphate (DMAPP). Finally the farnesyl diphosphate synthase ERG20 catalyzes the sequential condensation of isopentenyl pyrophosphate with dimethylallyl pyrophosphate, and then with the resultant geranylpyrophosphate to the ultimate product farnesyl pyrophosphate. The sequence is that of Diphosphomevalonate decarboxylase from Saccharomyces cerevisiae (strain ATCC 204508 / S288c) (Baker's yeast).